The sequence spans 556 residues: 2-succinyl-5-enolpyruvyl-6-hydroxy-3-cyclohexene-1-carboxylate synthase (556 aa).

It belongs to the TPP enzyme family. MenD subfamily. In terms of assembly, homodimer. Mg(2+) serves as cofactor. Requires Mn(2+) as cofactor. Thiamine diphosphate is required as a cofactor.

It catalyses the reaction isochorismate + 2-oxoglutarate + H(+) = 5-enolpyruvoyl-6-hydroxy-2-succinyl-cyclohex-3-ene-1-carboxylate + CO2. The protein operates within quinol/quinone metabolism; 1,4-dihydroxy-2-naphthoate biosynthesis; 1,4-dihydroxy-2-naphthoate from chorismate: step 2/7. It participates in quinol/quinone metabolism; menaquinone biosynthesis. In terms of biological role, catalyzes the thiamine diphosphate-dependent decarboxylation of 2-oxoglutarate and the subsequent addition of the resulting succinic semialdehyde-thiamine pyrophosphate anion to isochorismate to yield 2-succinyl-5-enolpyruvyl-6-hydroxy-3-cyclohexene-1-carboxylate (SEPHCHC). This Salmonella arizonae (strain ATCC BAA-731 / CDC346-86 / RSK2980) protein is 2-succinyl-5-enolpyruvyl-6-hydroxy-3-cyclohexene-1-carboxylate synthase.